Consider the following 453-residue polypeptide: Tubulin delta chain (453 aa).

143-149 (AGGTGSG) is a GTP binding site.

Belongs to the tubulin family. As to quaternary structure, found in a complex with TEDC1, TEDC2, TUBE1 and TUBD1.

The protein resides in the nucleus. It localises to the cytoplasm. The protein localises to the cytoskeleton. It is found in the microtubule organizing center. Its subcellular location is the centrosome. The protein resides in the centriole. It localises to the cell projection. The protein localises to the cilium. In terms of biological role, acts as a positive regulator of hedgehog signaling and regulates ciliary function. This Canis lupus familiaris (Dog) protein is Tubulin delta chain (TUBD1).